The sequence spans 504 residues: Anaerobic nitric oxide reductase transcription regulator NorR (504 aa).

The residue at position 57 (aspartate 57) is a 4-aspartylphosphate. One can recognise a Sigma-54 factor interaction domain in the interval 187–416; sequence MIGLSPGMTQ…LEHAIHRAVV (230 aa). Residues 215–222 and 278–287 contribute to the ATP site; these read GETGTGKE and ADNGTLFLDE. The H-T-H motif DNA-binding region spans 479–498; it reads WAACARMLETDVANLHRLAK.

It functions in the pathway nitrogen metabolism; nitric oxide reduction. Functionally, required for the expression of anaerobic nitric oxide (NO) reductase, acts as a transcriptional activator for at least the norVW operon. Activation also requires sigma-54. In Escherichia coli O9:H4 (strain HS), this protein is Anaerobic nitric oxide reductase transcription regulator NorR.